A 394-amino-acid chain; its full sequence is uncharacterized protein (394 aa).

A run of 11 helical transmembrane segments spans residues 10 to 30, 50 to 70, 79 to 99, 100 to 120, 138 to 158, 166 to 186, 218 to 238, 243 to 263, 291 to 311, 337 to 357, and 364 to 384; these read PALI…NYYA, FIVT…VPLG, IVSM…SQSL, AMMI…QILV, TIMS…GLLA, VFWV…RGLP, LLGC…AFLL, FNYS…GALG, WLAI…ILVL, LTAG…LISA, and GWAG…LVWW.

Belongs to the major facilitator superfamily.

The protein localises to the cell inner membrane. This is an uncharacterized protein from Escherichia coli O157:H7.